The primary structure comprises 396 residues: Serine/threonine-protein kinase VRK1 (396 aa).

Residues 37–317 (WKLGSPIGQG…LLDYVEKPLY (281 aa)) enclose the Protein kinase domain. ATP-binding positions include 43–51 (IGQGGFGCI) and lysine 71. Residue lysine 71 forms a Glycyl lysine isopeptide (Lys-Gly) (interchain with G-Cter in SUMO2) linkage. Catalysis depends on aspartate 177, which acts as the Proton acceptor. The interval 352 to 396 (KPVAKKRKKEAEESVESSVEDMECSDKQTEEATQTRSKTRKRVQK) is disordered. The segment covering 364–374 (ESVESSVEDME) has biased composition (acidic residues). Serine 376 bears the Phosphoserine mark. A required for interaction with the nucleosome region spans residues 387–393 (RSKTRKR).

The protein belongs to the protein kinase superfamily. CK1 Ser/Thr protein kinase family. VRK subfamily. In terms of assembly, interacts with HDAC1, KAT2B, SETDB1, KDM3A and KDM4A. Associates with the nucleosome through interactions with nucleosome DNA, histone H2A and histone H2B; the interaction with H2A and H2B is mediated by the nucleosome acidic patch, a cluster of negatively charged residues of H2A and H2B forming a cleft within the nucleosome core. Autophosphorylated at various serine and threonine residues. Autophosphorylation does not impair its ability to phosphorylate p53/TP53. Phosphorylation by PLK3 leads to induction of Golgi fragmentation during mitosis.

It is found in the nucleus. The protein resides in the cytoplasm. The protein localises to the cajal body. The enzyme catalyses L-seryl-[protein] + ATP = O-phospho-L-seryl-[protein] + ADP + H(+). It catalyses the reaction L-threonyl-[protein] + ATP = O-phospho-L-threonyl-[protein] + ADP + H(+). With respect to regulation, active in presence of Mn(2+), Mg(2+) and Zn(2+), but is not functional with Ca(2+) or Cu(2+). Has a higher affinity for Mn(2+) than for Mg(2+). RAN inhibits its autophosphorylation and its ability to phosphorylate histone H3. Functionally, serine/threonine kinase involved in the regulation of key cellular processes including the cell cycle, nuclear condensation, transcription regulation, and DNA damage response. Controls chromatin organization and remodeling by mediating phosphorylation of histone H3 on 'Thr-4' and histone H2AX (H2aXT4ph). It also phosphorylates KAT5 in response to DNA damage, promoting KAT5 association with chromatin and histone acetyltransferase activity. Is involved in the regulation of cell cycle progression of neural progenitors, and is required for proper cortical neuronal migration. Is involved in neurite elongation and branching in motor neurons, and has an essential role in Cajal bodies assembly, acting through COIL phosphorylation and the control of coilin degradation. Involved in Golgi disassembly during the cell cycle: following phosphorylation by PLK3 during mitosis, it is required to induce Golgi fragmentation. Phosphorylates BANF1: disrupts its ability to bind DNA, reduces its binding to LEM domain-containing proteins and causes its relocalization from the nucleus to the cytoplasm. Phosphorylates TP53BP1 and p53/TP53 on 'Thr-18', preventing the interaction between p53/TP53 and MDM2. Phosphorylates ATF2 which activates its transcriptional activity. Phosphorylates JUN. In Bos taurus (Bovine), this protein is Serine/threonine-protein kinase VRK1 (VRK1).